Here is a 2280-residue protein sequence, read N- to C-terminus: Protein Ycf2 (2280 aa).

ATP is bound at residue 1631 to 1638 (GSIGTGRS).

It belongs to the Ycf2 family.

The protein resides in the plastid. The protein localises to the chloroplast stroma. Functionally, probable ATPase of unknown function. Its presence in a non-photosynthetic plant (Epifagus virginiana) and experiments in tobacco indicate that it has an essential function which is probably not related to photosynthesis. This chain is Protein Ycf2 (ycf2-A), found in Nicotiana tabacum (Common tobacco).